The primary structure comprises 319 residues: Ribosomal RNA small subunit methyltransferase H (319 aa).

S-adenosyl-L-methionine contacts are provided by residues 35 to 37, aspartate 55, phenylalanine 84, aspartate 104, and glutamine 111; that span reads AGH.

This sequence belongs to the methyltransferase superfamily. RsmH family.

It localises to the cytoplasm. The enzyme catalyses cytidine(1402) in 16S rRNA + S-adenosyl-L-methionine = N(4)-methylcytidine(1402) in 16S rRNA + S-adenosyl-L-homocysteine + H(+). Specifically methylates the N4 position of cytidine in position 1402 (C1402) of 16S rRNA. The sequence is that of Ribosomal RNA small subunit methyltransferase H from Enterococcus hirae.